Reading from the N-terminus, the 358-residue chain is Peptide chain release factor 1 (358 aa).

Glutamine 233 is modified (N5-methylglutamine).

Belongs to the prokaryotic/mitochondrial release factor family. In terms of processing, methylated by PrmC. Methylation increases the termination efficiency of RF1.

It localises to the cytoplasm. Functionally, peptide chain release factor 1 directs the termination of translation in response to the peptide chain termination codons UAG and UAA. This Listeria innocua serovar 6a (strain ATCC BAA-680 / CLIP 11262) protein is Peptide chain release factor 1.